The primary structure comprises 220 residues: Transcriptional regulatory protein SpaR (220 aa).

Residues Lys3–Leu115 enclose the Response regulatory domain. Residue Asp51 is modified to 4-aspartylphosphate. A DNA-binding region (ompR/PhoB-type) is located at residues Gln124–Glu220.

Post-translationally, phosphorylated by SpaK.

It localises to the cytoplasm. Member of the two-component regulatory system SpaK/SpaR involved in the regulation of the biosynthesis of lantibiotic subtilin. SpaR may function as a regulatory protein. This Bacillus subtilis protein is Transcriptional regulatory protein SpaR (spaR).